The following is a 954-amino-acid chain: Leucine--tRNA ligase (954 aa).

Positions 40–51 (PYPSGAGLHVGH) match the 'HIGH' region motif. Positions 729-733 (KMSKS) match the 'KMSKS' region motif. Residue Lys732 coordinates ATP.

It belongs to the class-I aminoacyl-tRNA synthetase family.

It localises to the cytoplasm. It catalyses the reaction tRNA(Leu) + L-leucine + ATP = L-leucyl-tRNA(Leu) + AMP + diphosphate. This is Leucine--tRNA ligase from Flavobacterium johnsoniae (strain ATCC 17061 / DSM 2064 / JCM 8514 / BCRC 14874 / CCUG 350202 / NBRC 14942 / NCIMB 11054 / UW101) (Cytophaga johnsonae).